The chain runs to 300 residues: MLTKEFAQRVELSEKQVRKIVQHLEERGYHLSKTEYRGREATDFKEDDIELFTDIANKVKQTNSYDLAFEELEKEKDFLQVIVKDEDSQLPTDQNVAQLVEDLRSEIQKMREERQMLGQMINQVHQQQQELKELQTDITTKLDSNAQSLKSIQNSQEAIQSAQEQQSKDIAKANELKDSELRSHFDSMSNSASISQSNVASQSTTASLSQSESANDSMSSSLSESNSITSESNTNSKSEIESKSTSTSEFLSESGSVSNSEKSESISHSQSTSATPSSQSTYQQQPKEEKKGFFARLFNL.

The stretch at 67–179 (LAFEELEKEK…IAKANELKDS (113 aa)) forms a coiled coil. A compositionally biased stretch (low complexity) spans 203–285 (STTASLSQSE…PSSQSTYQQQ (83 aa)). The segment at 203–300 (STTASLSQSE…KGFFARLFNL (98 aa)) is disordered.

This is an uncharacterized protein from Staphylococcus epidermidis (strain ATCC 12228 / FDA PCI 1200).